The sequence spans 85 residues: Antifungal protein (85 aa).

Positions 1 to 18 (MVKLFVIVILALIAVAFG) are cleaved as a signal peptide. 2 repeat units span residues 19 to 25 (QHGHGGQ) and 67 to 73 (QHGHGGQ). The interval 19–73 (QHGHGGQDQHGYGHGQQAVYGKGHEGHGVNNLGQDGHGQHGYAHGHSDQHGHGGQ) is 2 X 7 AA repeats of Q-H-G-H-G-G-Q. Over residues 22 to 32 (HGGQDQHGYGH) the composition is skewed to gly residues. The segment at 22 to 85 (HGGQDQHGYG…QHDGYKNRGY (64 aa)) is disordered. The span at 63–85 (GHSDQHGHGGQHGQHDGYKNRGY) shows a compositional bias: basic and acidic residues.

Homodimer. In terms of processing, the N-terminus is blocked. Hemolymph.

Its function is as follows. This protein inhibits the growth of a variety of fungal species. The antifungal activity of this protein is enhanced by the presence of sarcotoxin IA. The sequence is that of Antifungal protein from Sarcophaga peregrina (Flesh fly).